A 134-amino-acid polypeptide reads, in one-letter code: Cytochrome b5 isoform E (134 aa).

The region spanning 5–81 (RKVLSFEEVS…MDKYFIGEID (77 aa)) is the Cytochrome b5 heme-binding domain. Heme contacts are provided by H40 and H64. Residues 107 to 127 (FIIKILQFLVPILILGLALVV) traverse the membrane as a helical segment. Positions 128–134 (RHYTKKD) match the AKR2A-binding sequence (ABS) required for endoplasmic reticulum membrane targeting motif.

The protein belongs to the cytochrome b5 family. In terms of assembly, interacts with CER1, BI-1, FAH1 and FAH2. Interacts with AKR2A. In terms of tissue distribution, expressed in roots, stems, leaves, flowers and siliques.

The protein localises to the cell membrane. The protein resides in the endoplasmic reticulum membrane. In terms of biological role, membrane bound hemoprotein which function as an electron carrier for several membrane bound oxygenases, including fatty acid desaturases. The protein is Cytochrome b5 isoform E (CYTB5-E) of Arabidopsis thaliana (Mouse-ear cress).